We begin with the raw amino-acid sequence, 101 residues long: MTHNHENDHQHEVITLVDEQGNETLFEILLTIDGREEFGKNYVLLVPAGSEEDESGEIEIQAYSFTENEDGTEGDLQPIPEDSDAEWDMIEEVFNSFLDEN.

It belongs to the UPF0473 family.

The sequence is that of UPF0473 protein MGAS10750_Spy1887 from Streptococcus pyogenes serotype M4 (strain MGAS10750).